A 155-amino-acid polypeptide reads, in one-letter code: MAGIDEIDEIIVRELRKNSRITLTELGKKVGLTASAVKNRIEKLEKLGVIKGYSAVVDTSFFGEFLTAIIEVELVDPEAPDLAKVLQPILRMRNISDVYKKSGEFQLAIRGTFRDVDSLNSFLKDLRKVYLKNLARRMRVSIVLENFKEAGVILK.

In terms of domain architecture, HTH asnC-type spans 4–65; it reads IDEIDEIIVR…VVDTSFFGEF (62 aa). Positions 23-42 form a DNA-binding region, H-T-H motif; sequence LTELGKKVGLTASAVKNRIE.

This is an uncharacterized protein from Pyrococcus abyssi (strain GE5 / Orsay).